A 307-amino-acid chain; its full sequence is MRYVVGHKNPDTDSIASAIVLAYFLDCYPARLGDINPETEFVLRKFGVMEPELIESAKGKEIILVDHSEKSQSFDDLEEGKLIAIIDHHKVGLTTTEPILYYAKPVGSTATVIAELYFKDAIDLIGGKKKELKPDLAGLLLSAIISDTVLFKSPTTTDLDKEMAKKLAEIAGISNIEEFGMEILKAKSVVGKLKPEEIINMDFKNFDFNGKKVGIGQVEVIDVSEVESKKEDIYKLLEEKLKNEGYDLIVFLITDIMKEGSEALVVGNKEMFEKAFNVKVEGNSVFLEGVMSRKKQVVPPLERAYNG.

Mn(2+) contacts are provided by histidine 7, aspartate 11, aspartate 13, aspartate 66, histidine 88, and aspartate 147.

The cofactor is Mn(2+).

The protein localises to the cytoplasm. The catalysed reaction is diphosphate + H2O = 2 phosphate + H(+). The chain is Manganese-dependent inorganic pyrophosphatase (ppaC) from Methanocaldococcus jannaschii (strain ATCC 43067 / DSM 2661 / JAL-1 / JCM 10045 / NBRC 100440) (Methanococcus jannaschii).